Here is a 368-residue protein sequence, read N- to C-terminus: tRNA 2-selenouridine synthase (368 aa).

The Rhodanese domain maps to 15–138 (MLSGHPMIDV…MRQYLIEVID (124 aa)). C98 acts as the S-selanylcysteine intermediate in catalysis.

The protein belongs to the SelU family. Monomer.

The catalysed reaction is 5-methylaminomethyl-2-thiouridine(34) in tRNA + selenophosphate + (2E)-geranyl diphosphate + H2O + H(+) = 5-methylaminomethyl-2-selenouridine(34) in tRNA + (2E)-thiogeraniol + phosphate + diphosphate. It carries out the reaction 5-methylaminomethyl-2-thiouridine(34) in tRNA + (2E)-geranyl diphosphate = 5-methylaminomethyl-S-(2E)-geranyl-thiouridine(34) in tRNA + diphosphate. The enzyme catalyses 5-methylaminomethyl-S-(2E)-geranyl-thiouridine(34) in tRNA + selenophosphate + H(+) = 5-methylaminomethyl-2-(Se-phospho)selenouridine(34) in tRNA + (2E)-thiogeraniol. It catalyses the reaction 5-methylaminomethyl-2-(Se-phospho)selenouridine(34) in tRNA + H2O = 5-methylaminomethyl-2-selenouridine(34) in tRNA + phosphate. Involved in the post-transcriptional modification of the uridine at the wobble position (U34) of tRNA(Lys), tRNA(Glu) and tRNA(Gln). Catalyzes the conversion of 2-thiouridine (S2U-RNA) to 2-selenouridine (Se2U-RNA). Acts in a two-step process involving geranylation of 2-thiouridine (S2U) to S-geranyl-2-thiouridine (geS2U) and subsequent selenation of the latter derivative to 2-selenouridine (Se2U) in the tRNA chain. The polypeptide is tRNA 2-selenouridine synthase (Shewanella woodyi (strain ATCC 51908 / MS32)).